A 101-amino-acid polypeptide reads, in one-letter code: CRISPR-associated endoribonuclease Cas2 (101 aa).

Residue D17 coordinates Mg(2+).

It belongs to the CRISPR-associated endoribonuclease Cas2 protein family. In terms of assembly, homodimer, forms a heterotetramer with a Cas1 homodimer. The cofactor is Mg(2+).

Its function is as follows. CRISPR (clustered regularly interspaced short palindromic repeat), is an adaptive immune system that provides protection against mobile genetic elements (viruses, transposable elements and conjugative plasmids). CRISPR clusters contain sequences complementary to antecedent mobile elements and target invading nucleic acids. CRISPR clusters are transcribed and processed into CRISPR RNA (crRNA). Functions as a ssRNA-specific endoribonuclease. Involved in the integration of spacer DNA into the CRISPR cassette. This Methanopyrus kandleri (strain AV19 / DSM 6324 / JCM 9639 / NBRC 100938) protein is CRISPR-associated endoribonuclease Cas2.